Consider the following 205-residue polypeptide: Mitotic spindle assembly checkpoint protein MAD2A (205 aa).

Residue A2 is modified to N-acetylalanine. One can recognise an HORMA domain in the interval 14 to 197; the sequence is RGSAEIVAEF…TTIHKVNSMV (184 aa). Phosphoserine occurs at positions 130, 170, 185, and 195. Residues 195–205 are required for assuming the closed conformation and for interaction with CDC20; the sequence is SMVAYKTPVND.

Belongs to the MAD2 family. In terms of assembly, monomer and homodimer. Heterodimerizes with MAD2L1 in order to form a tetrameric MAD1L1-MAD2L1 core complex. In the closed and open conformation, interacts with MAD1L1. Formation of a heterotetrameric core complex containing two molecules each of MAD1L1 and of MAD2L1 promotes binding of another molecule of MAD2L1 to each MAD2L1, resulting in a heterohexamer. Interacts with MAD2L1BP. Interacts with ADAM17/TACE. Interacts with CDC20. Dimeric MAD2L1 in the closed conformation interacts with CDC20. Monomeric MAD2L1 in the open conformation does not interact with CDC20. CDC20 competes with MAD1L1 for MAD2L1 binding. In the closed conformation, interacts with BUB1B. Interacts with TTK. Interacts with TPR. Binds to UBD (via ubiquitin-like 1 domain) during mitosis. Interacts with isoform 1 and isoform 2 of NEK2. Interacts with HSF1; this interaction occurs in mitosis. Phosphorylated on multiple serine residues. The level of phosphorylation varies during the cell cycle and is highest during mitosis. Phosphorylation abolishes interaction with MAD1L1 and reduces interaction with CDC20. Phosphorylated by NEK2.

It localises to the nucleus. The protein resides in the chromosome. Its subcellular location is the centromere. It is found in the kinetochore. The protein localises to the cytoplasm. It localises to the cytoskeleton. The protein resides in the spindle pole. Component of the spindle-assembly checkpoint that prevents the onset of anaphase until all chromosomes are properly aligned at the metaphase plate. In the closed conformation (C-MAD2) forms a heterotetrameric complex with MAD1L1 at unattached kinetochores during prometaphase, and recruits an open conformation of MAD2L1 (O-MAD2) which then promotes the conversion of O-MAD2 to C-MAD2. Required for the execution of the mitotic checkpoint which monitors the process of kinetochore-spindle attachment and inhibits the activity of the anaphase promoting complex by sequestering CDC20 until all chromosomes are aligned at the metaphase plate. This chain is Mitotic spindle assembly checkpoint protein MAD2A (Mad2l1), found in Mus musculus (Mouse).